The primary structure comprises 132 residues: Large ribosomal subunit protein bL17 (132 aa).

It belongs to the bacterial ribosomal protein bL17 family. Part of the 50S ribosomal subunit. Contacts protein L32.

The chain is Large ribosomal subunit protein bL17 from Variovorax paradoxus (strain S110).